Here is a 473-residue protein sequence, read N- to C-terminus: Photosystem II CP43 reaction center protein (473 aa).

The propeptide occupies Met1–Glu14. Position 15 is an N-acetylthreonine (Thr15). Thr15 carries the post-translational modification Phosphothreonine. Transmembrane regions (helical) follow at residues Leu69–Ala93, Leu134–Asn155, Lys178–Thr200, Lys255–Ser275, and Trp291–Ala312. Residue Glu367 participates in [CaMn4O5] cluster binding. A helical transmembrane segment spans residues Arg447–Pro471.

It belongs to the PsbB/PsbC family. PsbC subfamily. In terms of assembly, PSII is composed of 1 copy each of membrane proteins PsbA, PsbB, PsbC, PsbD, PsbE, PsbF, PsbH, PsbI, PsbJ, PsbK, PsbL, PsbM, PsbT, PsbX, PsbY, PsbZ, Psb30/Ycf12, at least 3 peripheral proteins of the oxygen-evolving complex and a large number of cofactors. It forms dimeric complexes. It depends on Binds multiple chlorophylls and provides some of the ligands for the Ca-4Mn-5O cluster of the oxygen-evolving complex. It may also provide a ligand for a Cl- that is required for oxygen evolution. PSII binds additional chlorophylls, carotenoids and specific lipids. as a cofactor.

The protein localises to the plastid. The protein resides in the chloroplast thylakoid membrane. Its function is as follows. One of the components of the core complex of photosystem II (PSII). It binds chlorophyll and helps catalyze the primary light-induced photochemical processes of PSII. PSII is a light-driven water:plastoquinone oxidoreductase, using light energy to abstract electrons from H(2)O, generating O(2) and a proton gradient subsequently used for ATP formation. The polypeptide is Photosystem II CP43 reaction center protein (Manihot esculenta (Cassava)).